A 563-amino-acid polypeptide reads, in one-letter code: Inclusion membrane protein M (563 aa).

The Cytoplasmic segment spans residues 1 to 36; sequence MVYFRAHQPRHTPKTFPLEVHHSFSDKHPQIAKAMR. The helical transmembrane segment at 37 to 57 threads the bilayer; the sequence is ITGIALAALSLLAVVACVIAV. Residue Ser-58 is a topological domain, vacuolar. A helical membrane pass occupies residues 59 to 79; sequence AGGAAIPLAVISGIAVMSGLL. Residues 80–252 lie on the Cytoplasmic side of the membrane; sequence SAATIICSAK…VLKVALSLGV (173 aa). A helical transmembrane segment spans residues 253-273; that stretch reads LAGVAALIIFLPPSLPFIAVI. Position 274 (Gly-274) is a topological domain, vacuolar. Residues 275 to 295 traverse the membrane as a helical segment; it reads VSSLALGMASFLMIRGIKYLL. At 296–563 the chain is on the cytoplasmic side; the sequence is EHSPLNRKQL…QLAQYLLDNH (268 aa).

It belongs to the chlamydial CPn_0065/CT_288/TC_0561 family. As to quaternary structure, interacts with host CCDC146. In host cells infected with C.trachomatis incM, CCDC146 is recruited to the periphery of the pathogen-containing vacuole but recruitment is not dependent on incM.

It is found in the host vacuole. Its subcellular location is the host pathogen-containing vacuole. The protein resides in the host pathogen-containing vacuole membrane. The protein localises to the host pathogen-containing vacuole lumen. It localises to the secreted. Functionally, interferes with host cell cytokinesis, centrosome positioning and Golgi distribution, and contributes to the morphology and stability of the pathogen-containing vacuole. May exert its effects by acting directly or indirectly on host microtubules. This Chlamydia trachomatis serovar D (strain ATCC VR-885 / DSM 19411 / UW-3/Cx) protein is Inclusion membrane protein M.